Reading from the N-terminus, the 487-residue chain is b(0,+)-type amino acid transporter 1 (487 aa).

Residues 1–20 (MEETSPRRRREDEKSVHSTE) show a composition bias toward basic and acidic residues. Positions 1 to 23 (MEETSPRRRREDEKSVHSTEPKT) are disordered. At 1–31 (MEETSPRRRREDEKSVHSTEPKTTSLQKEVG) the chain is on the cytoplasmic side. Residue S18 is modified to Phosphoserine. A helical membrane pass occupies residues 32–55 (LLSGICIIVGTIIGSGIFISPKSV). Residue 43-47 (IIGSG) participates in L-arginine binding. Topologically, residues 56–62 (LANTESV) are extracellular. Residues 63–84 (GPCLIIWAACGVLATLGALCFA) traverse the membrane as a helical segment. Topologically, residues 85-110 (ELGTMITKSGGEYPYLMEAFGPIPAY) are cytoplasmic. Residues 111-137 (LFSWTSLIVMKPSSFAIICLSFSEYVC) traverse the membrane as a helical segment. Residues 138–147 (AAFYLGCRPP) are Extracellular-facing. The next 2 helical transmembrane spans lie at 148–169 (AVVV…NALS) and 170–193 (VRLG…IIII). The Extracellular segment spans residues 194-217 (SGLVLLAQGNVKNFQNSFEGSQTS). A helical transmembrane segment spans residues 218 to 238 (VGSISLAFYNGLWAYDGWNQL). D233 contacts L-arginine. At 239 to 251 (NYITEELRNPYRN) the chain is on the cytoplasmic side. A helical transmembrane segment spans residues 252–274 (LPMAIVIGIPLVTVCYILMNIAY). Over 275–302 (FTVMTPTELLQSQAVAVTFGDRVLYPAS) the chain is Extracellular. The chain crosses the membrane as a helical span at residues 303 to 325 (WVVPLFVAFSTIGAANGTCFTAG). Topologically, residues 326–351 (RLIYVAGREGHMLKVLSYISVKRLTP) are cytoplasmic. 2 helical membrane-spanning segments follow: residues 352–370 (APAL…IPGD) and 371–391 (INSL…MTIL). At 392–410 (GLVVMRFTRKDLERPIKVP) the chain is on the cytoplasmic side. A helical transmembrane segment spans residues 411 to 431 (IFIPIIVILVSVFLILAPIIS). Over 432–434 (SPA) the chain is Extracellular. The chain crosses the membrane as a helical span at residues 435–450 (WEYLYCVLFILSGLIF). Residues 451–487 (YFLFVHYKFRWAQKISRPITKHLQMLMEVVPPEKDPE) are Cytoplasmic-facing.

The protein belongs to the amino acid-polyamine-organocation (APC) superfamily. In terms of assembly, disulfide-linked heterodimer composed of the catalytic light chain subunit SLC7A9 and the heavy chain subunit SLC3A1. The heterodimer is the minimal functional unit. Assembles in heterotetramers (dimers of heterodimers) and higher order oligomers; the oligomerization is mediated by SLC3A1 likely to prevent degradation and facilitate heteromer trafficking to the plasma membrane. Interacts with CAV1. As to expression, outer medulla of kidney (at protein level). Kidney and small intestine. In the kidney localized to the apical membrane of the proximal tubules.

Its subcellular location is the apical cell membrane. It catalyses the reaction L-leucine(out) + L-arginine(in) = L-leucine(in) + L-arginine(out). It carries out the reaction L-histidine(out) + L-arginine(in) = L-histidine(in) + L-arginine(out). The enzyme catalyses L-arginine(in) + L-phenylalanine(out) = L-arginine(out) + L-phenylalanine(in). The catalysed reaction is L-cysteine(out) + L-arginine(in) = L-cysteine(in) + L-arginine(out). It catalyses the reaction L-cystine(out) + L-arginine(in) = L-cystine(in) + L-arginine(out). It carries out the reaction L-lysine(out) + L-arginine(in) = L-lysine(in) + L-arginine(out). Its function is as follows. Associates with SLC3A1 to form a functional transporter complex that mediates the electrogenic exchange between cationic amino acids and neutral amino acids, with a stoichiometry of 1:1. Has system b(0,+)-like activity with high affinity for extracellular cationic amino acids and L-cystine and lower affinity for intracellular neutral amino acids. Substrate exchange is driven by high concentration of intracellular neutral amino acids and the intracellular reduction of L-cystine to L-cysteine. Required for reabsorption of L-cystine and dibasic amino acids across the brush border membrane in renal proximal tubules. The chain is b(0,+)-type amino acid transporter 1 (Slc7a9) from Rattus norvegicus (Rat).